Here is a 179-residue protein sequence, read N- to C-terminus: Large ribosomal subunit protein uL5 (179 aa).

The protein belongs to the universal ribosomal protein uL5 family. Part of the 50S ribosomal subunit; part of the 5S rRNA/L5/L18/L25 subcomplex. Contacts the 5S rRNA and the P site tRNA. Forms a bridge to the 30S subunit in the 70S ribosome.

In terms of biological role, this is one of the proteins that bind and probably mediate the attachment of the 5S RNA into the large ribosomal subunit, where it forms part of the central protuberance. In the 70S ribosome it contacts protein S13 of the 30S subunit (bridge B1b), connecting the 2 subunits; this bridge is implicated in subunit movement. Contacts the P site tRNA; the 5S rRNA and some of its associated proteins might help stabilize positioning of ribosome-bound tRNAs. This Desulfovibrio desulfuricans (strain ATCC 27774 / DSM 6949 / MB) protein is Large ribosomal subunit protein uL5.